A 110-amino-acid chain; its full sequence is Cysteine-rich and transmembrane domain-containing protein 1 (110 aa).

The span at 1-18 (MNYENPPPYASPPAPYPP) shows a compositional bias: pro residues. Residues 1–45 (MNYENPPPYASPPAPYPPYGQQQPSYPVPNQYPGNPPGPVGYQPA) are disordered. A compositionally biased stretch (low complexity) spans 19-29 (YGQQQPSYPVP). The helical transmembrane segment at 87–104 (SGESACLTACWTALCCCC) threads the bilayer.

Belongs to the CYSTM1 family.

The protein localises to the membrane. The protein is Cysteine-rich and transmembrane domain-containing protein 1 (cystm1) of Xenopus tropicalis (Western clawed frog).